We begin with the raw amino-acid sequence, 101 residues long: ATP-dependent Clp protease adapter protein ClpS (101 aa).

The protein belongs to the ClpS family. In terms of assembly, binds to the N-terminal domain of the chaperone ClpA.

Its function is as follows. Involved in the modulation of the specificity of the ClpAP-mediated ATP-dependent protein degradation. The sequence is that of ATP-dependent Clp protease adapter protein ClpS from Treponema denticola (strain ATCC 35405 / DSM 14222 / CIP 103919 / JCM 8153 / KCTC 15104).